Consider the following 109-residue polypeptide: Parvalbumin beta (109 aa).

Alanine 2 carries the N-acetylalanine modification. The interval alanine 22–threonine 41 is igE-binding. EF-hand domains are found at residues lysine 39–glycine 74 and leucine 78–glycine 109. Ca(2+) contacts are provided by aspartate 52, aspartate 54, serine 56, phenylalanine 58, glutamate 60, glutamate 63, aspartate 91, aspartate 93, aspartate 95, lysine 97, and glutamate 102.

It belongs to the parvalbumin family. The N-terminus is blocked. In terms of tissue distribution, expressed in both white and dark muscles (at protein level). About eight and a half times lower expression in the dark muscle than in the white muscle (at protein level).

Functionally, in muscle, parvalbumin is thought to be involved in relaxation after contraction. It binds two calcium ions. This is Parvalbumin beta from Scomber japonicus (Chub mackerel).